A 169-amino-acid chain; its full sequence is Protein pid-1 (169 aa).

Positions Ser137–Ser151 are enriched in polar residues. Residues Ser137 to Ala169 form a disordered region.

Component of the pid-1 variant of the PETISCO complex (also called the pid-3, erh-2, tofu-6, and ife-3 small RNA complex) containing at least pid-1, tofu-6, ife-3, pid-3, and erh-2, which is required for the biogenesis of a class of 21 nucleotide PIWI-interacting RNAs (piRNAs) that possess a uracil residue at the 5'-end (also called 21U-RNAs). Within the complex interacts with pid-3; the interaction is direct. Within the complex interacts with erh-2. Within the complex interacts with tofu-6. In terms of tissue distribution, expressed predominantly in the germline (at protein level).

It localises to the cytoplasm. It is found in the nucleus. The protein localises to the perinuclear region. Component of the pid-1 variant of the PETISCO complex which is required for the biogenesis of a class of 21 nucleotide PIWI-interacting RNAs (piRNAs) that possess a uracil residue at the 5'-end (also called 21U-RNAs). Within the complex acts as an adapter which binds to the complex via erh-2. Involved in the biogenesis of 21U-RNAs which guide the piwi protein prg-1 to its DNA targets for silencing. Plays a role in small RNA-directed transgenerational epigenetic inheritance. The protein is Protein pid-1 of Caenorhabditis elegans.